The sequence spans 698 residues: Colicin V secretion/processing ATP-binding protein CvaB (698 aa).

The Peptidase C39 domain occupies 26–145 (QTETAECGLA…RYFTGVALEV (120 aa)). Residue Cys32 is part of the active site. 7 consecutive transmembrane segments (helical) span residues 33-53 (GLAC…LIYL), 92-112 (VLKT…LVSV), 176-196 (LAKI…MPVG), 211-231 (GLLT…AATS), 289-311 (TSVI…MLLY), 315-334 (LTWI…LVTY), and 412-432 (IVIL…IGMF). Residues 176-458 (LAKIFCLSVV…LTSFLLQLRI (283 aa)) form the ABC transmembrane type-1 domain. The region spanning 492–698 (LETNGLSYRY…LRTVDRVISI (207 aa)) is the ABC transporter domain. 526 to 533 (GASGAGKT) contributes to the ATP binding site.

This sequence belongs to the ABC transporter superfamily. Colicin V exporter (TC 3.A.1.110.2) family.

It localises to the cell membrane. Functionally, involved, in conjunction with CvaA, in the secretion of colicin V. This Escherichia coli protein is Colicin V secretion/processing ATP-binding protein CvaB (cvaB).